The primary structure comprises 425 residues: Histidine--tRNA ligase (425 aa).

The protein belongs to the class-II aminoacyl-tRNA synthetase family. As to quaternary structure, homodimer.

It is found in the cytoplasm. The enzyme catalyses tRNA(His) + L-histidine + ATP = L-histidyl-tRNA(His) + AMP + diphosphate + H(+). The protein is Histidine--tRNA ligase of Shewanella sp. (strain MR-4).